The following is a 279-amino-acid chain: SERGCAFCGAKLVIGGVLKDTIQMIHGPLGCAYDTWHTKRYPTDNGHFNMKYVWSTDMKESHVVFGGEKRLEKSMHEAFDEMPDIKRMIVYTTCPTALIGDDIKAVAKKVMKDRPDVDVFTVECPGFSGVSQSKGHHVLNIGWINEKVETMEKEITSEYTMNFIGDFNIQGDTQLLQTYWDRLGIQVVAHFTGNGTYDDLRCMHQAQLNVVNCARSSGYIANELKKRYGIPRLDIDSWGFNYMAEGIRKICAFFGIEEKGEALIAEEYAKWKPKLDWYK.

3 residues coordinate [8Fe-7S] cluster: cysteine 5, cysteine 31, and cysteine 94. Residue cysteine 213 coordinates [7Fe-V-9S-C-homocitryl] cluster.

This sequence belongs to the NifD/NifK/NifE/NifN family. Hexamer of two alpha, two beta, and two delta chains. Requires [8Fe-7S] cluster as cofactor. It depends on [7Fe-V-9S-C-homocitryl] cluster as a cofactor.

It catalyses the reaction N2 + 8 reduced [2Fe-2S]-[ferredoxin] + 16 ATP + 16 H2O = H2 + 8 oxidized [2Fe-2S]-[ferredoxin] + 2 NH4(+) + 16 ADP + 16 phosphate + 6 H(+). Its function is as follows. This vanadium-iron protein is part of the nitrogenase complex that catalyzes the key enzymatic reactions in nitrogen fixation. This is Nitrogenase vanadium-iron protein alpha chain (vnfD) from Azotobacter salinestris.